A 322-amino-acid polypeptide reads, in one-letter code: TATA box-binding protein-like 2 (322 aa).

A disordered region spans residues proline 31 to alanine 54. Over residues alanine 32–leucine 42 the composition is skewed to polar residues.

It belongs to the TBP family.

It is found in the nucleus. TATA box-binding transcription factor. Members of the TBP family are differentially required to regulate transcription and development during early embryogenesis. The polypeptide is TATA box-binding protein-like 2 (Takifugu rubripes (Japanese pufferfish)).